A 433-amino-acid chain; its full sequence is L-lysine 2,3-aminomutase (433 aa).

Residues 122-334 (HRYPDRVLFY…SLIGHTTGFA (213 aa)) enclose the Radical SAM core domain. 3 residues coordinate [4Fe-4S] cluster: Cys-136, Cys-140, and Cys-143. Cys-279 contributes to the Zn(2+) binding site. Lys-348 bears the N6-(pyridoxal phosphate)lysine mark. Zn(2+) is bound by residues Cys-389, Cys-392, and Cys-396.

The protein belongs to the radical SAM superfamily. KamA family. [4Fe-4S] cluster serves as cofactor. It depends on pyridoxal 5'-phosphate as a cofactor. Requires Zn(2+) as cofactor.

The enzyme catalyses L-lysine = (3S)-3,6-diaminohexanoate. In terms of biological role, catalyzes the interconversion of L-alpha-lysine and L-beta-lysine. Is involved in the biosynthesis pathway of N6-acetyl-beta-lysine, a compatible solute produced by methanogenic archaea that helps cells to cope with salt stress. The sequence is that of L-lysine 2,3-aminomutase (ablA) from Methanococcus maripaludis (strain DSM 14266 / JCM 13030 / NBRC 101832 / S2 / LL).